A 478-amino-acid chain; its full sequence is Glycogen synthase (478 aa).

Lys-16 lines the ADP-alpha-D-glucose pocket.

It belongs to the glycosyltransferase 1 family. Bacterial/plant glycogen synthase subfamily.

The catalysed reaction is [(1-&gt;4)-alpha-D-glucosyl](n) + ADP-alpha-D-glucose = [(1-&gt;4)-alpha-D-glucosyl](n+1) + ADP + H(+). It functions in the pathway glycan biosynthesis; glycogen biosynthesis. Its function is as follows. Synthesizes alpha-1,4-glucan chains using ADP-glucose. The chain is Glycogen synthase from Lachnospira eligens (strain ATCC 27750 / DSM 3376 / VPI C15-48 / C15-B4) (Eubacterium eligens).